The sequence spans 118 residues: Immunoglobulin lambda variable 2-8 (118 aa).

The signal sequence occupies residues 1–19 (MAWALLLLTLLTQGTGSWA). Pyrrolidone carboxylic acid is present on glutamine 20. Positions 20–44 (QSALTQPPSASGSPGQSVTISCTGT) are framework-1. The 99-residue stretch at 20-118 (QSALTQPPSA…CSSYAGSNNF (99 aa)) folds into the Ig-like domain. Cysteine 41 and cysteine 109 are disulfide-bonded. The segment at 45–53 (SSDVGGYNY) is complementarity-determining-1. Positions 54–70 (VSWYQQHPGKAPKLMIY) are framework-2. Residues 71–73 (EVS) are complementarity-determining-2. Positions 74–109 (KRPSGVPDRFSGSKSGNTASLTVSGLQAEDEADYYC) are framework-3. The tract at residues 76–97 (PSGVPDRFSGSKSGNTASLTVS) is disordered. The span at 85 to 97 (GSKSGNTASLTVS) shows a compositional bias: polar residues. Residues 110 to 118 (SSYAGSNNF) form a complementarity-determining-3 region.

In terms of assembly, immunoglobulins are composed of two identical heavy chains and two identical light chains; disulfide-linked.

Its subcellular location is the secreted. The protein localises to the cell membrane. V region of the variable domain of immunoglobulin light chains that participates in the antigen recognition. Immunoglobulins, also known as antibodies, are membrane-bound or secreted glycoproteins produced by B lymphocytes. In the recognition phase of humoral immunity, the membrane-bound immunoglobulins serve as receptors which, upon binding of a specific antigen, trigger the clonal expansion and differentiation of B lymphocytes into immunoglobulins-secreting plasma cells. Secreted immunoglobulins mediate the effector phase of humoral immunity, which results in the elimination of bound antigens. The antigen binding site is formed by the variable domain of one heavy chain, together with that of its associated light chain. Thus, each immunoglobulin has two antigen binding sites with remarkable affinity for a particular antigen. The variable domains are assembled by a process called V-(D)-J rearrangement and can then be subjected to somatic hypermutations which, after exposure to antigen and selection, allow affinity maturation for a particular antigen. The sequence is that of Immunoglobulin lambda variable 2-8 from Homo sapiens (Human).